A 166-amino-acid polypeptide reads, in one-letter code: Large ribosomal subunit protein uL11z (166 aa).

Belongs to the universal ribosomal protein uL11 family.

In terms of biological role, binds directly to 26S ribosomal RNA. The polypeptide is Large ribosomal subunit protein uL11z (RPL12A) (Arabidopsis thaliana (Mouse-ear cress)).